A 407-amino-acid polypeptide reads, in one-letter code: Argininosuccinate synthase (407 aa).

Residues A16–S24 and A44 each bind ATP. L-citrulline contacts are provided by Y96 and S101. G126 serves as a coordination point for ATP. L-aspartate is bound by residues T128, N132, and D133. N132 serves as a coordination point for L-citrulline. Positions 136, 185, 194, 270, and 282 each coordinate L-citrulline.

Belongs to the argininosuccinate synthase family. Type 1 subfamily. As to quaternary structure, homotetramer.

The protein resides in the cytoplasm. The enzyme catalyses L-citrulline + L-aspartate + ATP = 2-(N(omega)-L-arginino)succinate + AMP + diphosphate + H(+). The protein operates within amino-acid biosynthesis; L-arginine biosynthesis; L-arginine from L-ornithine and carbamoyl phosphate: step 2/3. In Shewanella loihica (strain ATCC BAA-1088 / PV-4), this protein is Argininosuccinate synthase.